The following is a 1217-amino-acid chain: Splicing factor 3B subunit 3 (1217 aa).

Interaction with PHF5A, SF3B1 and SF3B5 stretches follow at residues 105–119 (ETFG…VPGQ) and 145–168 (NRDA…TLVY). Position 156 is a phosphoserine (Ser-156). 2 interaction with SF3B1 and SF3B5 regions span residues 193-231 (DNDP…LEEH) and 786-804 (RKFV…ETDH). Positions 1028–1049 (TYPRWVTTASLLDYDTVAGADK) are interaction with SF3B1. The segment at 1100–1123 (TVLSLQKTTLIPGGSESLVYTTLS) is interaction with SF3B5. Position 1200 is a phosphothreonine (Thr-1200).

This sequence belongs to the RSE1 family. Component of the 17S U2 SnRNP complex, a ribonucleoprotein complex that contains small nuclear RNA (snRNA) U2 and a number of specific proteins. Part of the SF3B subcomplex of the 17S U2 SnRNP complex. SF3B associates with the splicing subcomplex SF3A and a 12S RNA unit to form the U2 small nuclear ribonucleoproteins complex (U2 snRNP). Within the SF3B subcomplex, interacts directly with SF3B1 (via HEAT domain), SF3B5 and PHF5A. Identified in the spliceosome A complex; remains associated with the spliceosome throughout the splicing process. Component of the spliceosome B complex. Identified in the spliceosome C complex. Identified in the spliceosome E complex. Component of the minor (U12-type spliceosome) spliceosome. Within this complex, interacts with SCNM1. Associates with the STAGA transcription coactivator-HAT complex. Interacts with SUPT3H. Interacts with TAF3.

The protein resides in the nucleus. Functionally, component of the 17S U2 SnRNP complex of the spliceosome, a large ribonucleoprotein complex that removes introns from transcribed pre-mRNAs. The 17S U2 SnRNP complex (1) directly participates in early spliceosome assembly and (2) mediates recognition of the intron branch site during pre-mRNA splicing by promoting the selection of the pre-mRNA branch-site adenosine, the nucleophile for the first step of splicing. Within the 17S U2 SnRNP complex, SF3B3 is part of the SF3B subcomplex, which is required for 'A' complex assembly formed by the stable binding of U2 snRNP to the branchpoint sequence in pre-mRNA. Sequence independent binding of SF3A and SF3B subcomplexes upstream of the branch site is essential, it may anchor U2 snRNP to the pre-mRNA. May also be involved in the assembly of the 'E' complex. Also acts as a component of the minor spliceosome, which is involved in the splicing of U12-type introns in pre-mRNAs. The protein is Splicing factor 3B subunit 3 (Sf3b3) of Mus musculus (Mouse).